A 460-amino-acid chain; its full sequence is Bifunctional protein GlmU (460 aa).

The interval 1 to 235 is pyrophosphorylase; the sequence is MALSAAIVLA…PLTVEGVNDR (235 aa). UDP-N-acetyl-alpha-D-glucosamine is bound by residues 9 to 12, K23, Q76, and 81 to 82; these read LAAG and GT. D109 provides a ligand contact to Mg(2+). Residues G146, E161, N176, and N233 each coordinate UDP-N-acetyl-alpha-D-glucosamine. N233 contacts Mg(2+). Residues 236–256 form a linker region; it reads VQLAALSKTYNRRVCERWMRD. An N-acetyltransferase region spans residues 257 to 460; that stretch reads GVTILDPETT…VEGWKPAWER (204 aa). The UDP-N-acetyl-alpha-D-glucosamine site is built by R338 and K356. Catalysis depends on H368, which acts as the Proton acceptor. UDP-N-acetyl-alpha-D-glucosamine contacts are provided by Y371 and N382. Residues 391-392 and A428 each bind acetyl-CoA; that span reads NY.

In the N-terminal section; belongs to the N-acetylglucosamine-1-phosphate uridyltransferase family. The protein in the C-terminal section; belongs to the transferase hexapeptide repeat family. As to quaternary structure, homotrimer. Mg(2+) is required as a cofactor.

It is found in the cytoplasm. The enzyme catalyses alpha-D-glucosamine 1-phosphate + acetyl-CoA = N-acetyl-alpha-D-glucosamine 1-phosphate + CoA + H(+). It catalyses the reaction N-acetyl-alpha-D-glucosamine 1-phosphate + UTP + H(+) = UDP-N-acetyl-alpha-D-glucosamine + diphosphate. The protein operates within nucleotide-sugar biosynthesis; UDP-N-acetyl-alpha-D-glucosamine biosynthesis; N-acetyl-alpha-D-glucosamine 1-phosphate from alpha-D-glucosamine 6-phosphate (route II): step 2/2. It functions in the pathway nucleotide-sugar biosynthesis; UDP-N-acetyl-alpha-D-glucosamine biosynthesis; UDP-N-acetyl-alpha-D-glucosamine from N-acetyl-alpha-D-glucosamine 1-phosphate: step 1/1. Its pathway is bacterial outer membrane biogenesis; LPS lipid A biosynthesis. Functionally, catalyzes the last two sequential reactions in the de novo biosynthetic pathway for UDP-N-acetylglucosamine (UDP-GlcNAc). The C-terminal domain catalyzes the transfer of acetyl group from acetyl coenzyme A to glucosamine-1-phosphate (GlcN-1-P) to produce N-acetylglucosamine-1-phosphate (GlcNAc-1-P), which is converted into UDP-GlcNAc by the transfer of uridine 5-monophosphate (from uridine 5-triphosphate), a reaction catalyzed by the N-terminal domain. The chain is Bifunctional protein GlmU from Bifidobacterium longum (strain DJO10A).